Reading from the N-terminus, the 644-residue chain is uncharacterized protein (644 aa).

The segment at 123-644 (VSQQIQHDQH…AVGKKKPTKK (522 aa)) is disordered. Residues 133-155 (PQYNKHPQNNHHPQNTQHSQNNP) are compositionally biased toward low complexity. A compositionally biased stretch (basic and acidic residues) spans 159–174 (NINESENKEDLSDRSS). Over residues 175–191 (DSANSEESHNSQYSQDS) the composition is skewed to polar residues. Over residues 192–204 (GDSRNYQDSEDNK) the composition is skewed to basic and acidic residues. Over residues 216–233 (NKLIVQRLTNPKITPDTI) the composition is skewed to polar residues. Composition is skewed to basic and acidic residues over residues 236–249 (SNKD…KDLS) and 256–279 (SIKD…KSKE). 2 stretches are compositionally biased toward acidic residues: residues 292–301 (DGDDLDDLGN) and 310–338 (SDYE…DDSN). The span at 367–400 (KSPSNSKKSKTNQKLSQSSKKISSKTITNSGSKS) shows a compositional bias: low complexity. Residues 447 to 476 (SDDSDNESDNESDNESNNDSDNETDSEIDD) are compositionally biased toward acidic residues. The span at 496-531 (PKTPMKPNNKTTSVSKPVSKPPVKSSIKNNTKNNKP) shows a compositional bias: low complexity. Basic and acidic residues predominate over residues 544–558 (KQKDQSESQSDKDID). The span at 585 to 594 (PPKSVSLPSS) shows a compositional bias: low complexity. A compositionally biased stretch (polar residues) spans 607-630 (TAKTQNKSKSQPKTNGSKTSTKSI).

This is an uncharacterized protein from Acanthamoeba polyphaga mimivirus (APMV).